We begin with the raw amino-acid sequence, 217 residues long: AFG2-interacting ribosome maturation factor (217 aa).

Part of the 55LCC heterohexameric ATPase complex composed at least of AIRIM, AFG2A, AFG2B and CINP. Does not associate with pre-60S ribosomal particles. Phosphorylated on serines by CK2 kinase.

Its subcellular location is the nucleus. The protein resides in the cytoplasm. Part of the 55LCC heterohexameric ATPase complex which is chromatin-associated and promotes replisome proteostasis to maintain replication fork progression and genome stability. Required for replication fork progression, sister chromatid cohesion, and chromosome stability. The ATPase activity is specifically enhanced by replication fork DNA and is coupled to cysteine protease-dependent cleavage of replisome substrates in response to replication fork damage. Uses ATPase activity to process replisome substrates in S-phase, facilitating their proteolytic turnover from chromatin to ensure DNA replication and mitotic fidelity. Involved in the cytoplasmic maturation steps of pre-60S ribosomal particles by promoting the release of shuttling protein RSL24D1/RLP24 from the pre-ribosomal particles. In Mus musculus (Mouse), this protein is AFG2-interacting ribosome maturation factor (Airim).